The sequence spans 264 residues: Ferric siderophore reductase (264 aa).

An FAD-binding FR-type domain is found at 9-127; that stretch reads SPTRLTYISD…PGPLKMNRFD (119 aa). Residues R73, S74, T76, D90, V92, H96, A100, T101, K247, N249, T250, and A252 each coordinate FAD.

It belongs to the SIP oxidoreductase family. Requires FAD as cofactor.

In terms of biological role, ferric-siderophore reductase involved in iron removal from the siderophores after their transport into the cell. Catalyzes the reduction of the ferric iron bound to the hydroxamate siderophores produced by Shewanella to ferrous iron. Can use a ferredoxin as electron donor. Despite the clear evidence for the interaction with NAD(P)H, no direct reduction of the enzyme by these compounds is observed, nor consumption of NAD(P)H, suggesting that NADH and NADPH are not the physiological electron donors. The chain is Ferric siderophore reductase from Shewanella frigidimarina (strain NCIMB 400).